Reading from the N-terminus, the 163-residue chain is Nucleotide-binding protein PM1656 (163 aa).

It belongs to the YajQ family.

Functionally, nucleotide-binding protein. In Pasteurella multocida (strain Pm70), this protein is Nucleotide-binding protein PM1656.